A 669-amino-acid chain; its full sequence is DNA ligase (669 aa).

Residues 33–37, 82–83, and Glu-115 contribute to the NAD(+) site; these read DVTYD and SL. The N6-AMP-lysine intermediate role is filled by Lys-117. Residues Arg-138, Glu-172, Lys-286, and Lys-310 each contribute to the NAD(+) site. Zn(2+) contacts are provided by Cys-401, Cys-404, Cys-417, and Cys-422. The region spanning 589–669 is the BRCT domain; sequence VDSSFLFGKK…DIKNLVNLDD (81 aa).

The protein belongs to the NAD-dependent DNA ligase family. LigA subfamily. Mg(2+) serves as cofactor. Mn(2+) is required as a cofactor.

It carries out the reaction NAD(+) + (deoxyribonucleotide)n-3'-hydroxyl + 5'-phospho-(deoxyribonucleotide)m = (deoxyribonucleotide)n+m + AMP + beta-nicotinamide D-nucleotide.. Its function is as follows. DNA ligase that catalyzes the formation of phosphodiester linkages between 5'-phosphoryl and 3'-hydroxyl groups in double-stranded DNA using NAD as a coenzyme and as the energy source for the reaction. It is essential for DNA replication and repair of damaged DNA. In Borrelia duttonii (strain Ly), this protein is DNA ligase.